The primary structure comprises 385 residues: Rubredoxin-NAD(+) reductase (385 aa).

Residues A8–A11, S32–R33, I79, E156, D275, and I293 contribute to the FAD site.

Belongs to the FAD-dependent oxidoreductase family. In terms of assembly, homodimer. FAD serves as cofactor.

The protein localises to the cytoplasm. The enzyme catalyses 2 reduced [rubredoxin] + NAD(+) + H(+) = 2 oxidized [rubredoxin] + NADH. It functions in the pathway hydrocarbon metabolism; alkane degradation. Involved in the hydrocarbon hydroxylating system, which transfers electrons from NADH to rubredoxin reductase and then through rubredoxin to alkane 1 monooxygenase. The chain is Rubredoxin-NAD(+) reductase (alkT) from Ectopseudomonas oleovorans (Pseudomonas oleovorans).